We begin with the raw amino-acid sequence, 349 residues long: Probable transporter vicT (349 aa).

Positions isoleucine 25–leucine 153 constitute an EamA domain. The next 9 helical transmembrane spans lie at proline 49 to tryptophan 69, alanine 89 to serine 109, alanine 111 to glycine 131, threonine 133 to leucine 153, leucine 179 to methionine 199, phenylalanine 215 to tryptophan 235, leucine 244 to glycine 264, arginine 269 to tryptophan 289, and asparagine 294 to phenylalanine 314.

Belongs to the TPT transporter family. SLC35D subfamily.

The protein localises to the membrane. Functionally, probable transporter; part of the gene cluster that mediates the biosynthesis of the secondary metabolite victorin, the molecular basis for Victoria blight of oats. The polypeptide is Probable transporter vicT (Bipolaris victoriae (strain FI3) (Victoria blight of oats agent)).